Here is a 926-residue protein sequence, read N- to C-terminus: Tyrosine-protein phosphatase non-receptor type 4 (926 aa).

One can recognise an FERM domain in the interval 29 to 312 (VVCNILLLDN…EHHTFFRLDR (284 aa)). Disordered regions lie at residues 380–412 (DDRL…TRLR) and 430–475 (EVFV…KNSW). Polar residues-rich tracts occupy residues 398 to 408 (NHRNSTFTQEG) and 430 to 456 (EVFV…SQET). A Phosphoserine modification is found at S474. The PDZ domain maps to 517-589 (LIRMKPDENG…DQVVLFIKAS (73 aa)). One can recognise a Tyrosine-protein phosphatase domain in the interval 655–911 (VLTQFDQLYR…RFVCEAILKV (257 aa)). Residues D820, 852-858 (CSAGIGR), and Q896 contribute to the substrate site. The Phosphocysteine intermediate role is filled by C852.

The protein belongs to the protein-tyrosine phosphatase family. Non-receptor class subfamily. Interacts with MAPK12 (via C-terminus); this interaction abolishes PTPN4 catalytic autoinhibition and thus activates the phosphatase activity. In terms of assembly, (Microbial infection) Interacts with attenuated rabies virus protein G; this interaction is required for virally-induced apoptosis. In terms of processing, highly phosphorylated on serine and threonine residues but not on tyrosines. Cleaved and activated by calpain I/CAPN1.

Its subcellular location is the cell membrane. It localises to the cytoplasm. It is found in the cytoskeleton. It carries out the reaction O-phospho-L-tyrosyl-[protein] + H2O = L-tyrosyl-[protein] + phosphate. Functionally, phosphatase that plays a role in immunity, learning, synaptic plasticity or cell homeostasis. Regulates neuronal cell homeostasis by protecting neurons against apoptosis. Negatively regulates TLR4-induced interferon beta production by dephosphorylating adapter TICAM2 and inhibiting subsequent TRAM-TRIF interaction. Also dephosphorylates the immunoreceptor tyrosine-based activation motifs/ITAMs of the TCR zeta subunit and thereby negatively regulates TCR-mediated signaling pathway. May act at junctions between the membrane and the cytoskeleton. This Homo sapiens (Human) protein is Tyrosine-protein phosphatase non-receptor type 4 (PTPN4).